The sequence spans 457 residues: D-hydantoinase (457 aa).

Zn(2+)-binding residues include His57 and His59. Ser69 bears the Phosphoserine mark. Residue Lys148 coordinates Zn(2+). Lys148 carries the N6-carboxylysine modification. Residue Tyr153 participates in substrate binding. Zn(2+) is bound by residues His181 and His237. Residue Thr286 coordinates substrate. Asp313 is a Zn(2+) binding site. Residue Asn335 participates in substrate binding.

It belongs to the metallo-dependent hydrolases superfamily. Hydantoinase/dihydropyrimidinase family. As to quaternary structure, homotetramer. Zn(2+) is required as a cofactor. In terms of processing, carboxylation allows a single lysine to coordinate two zinc ions.

Its function is as follows. Catalyzes the stereospecific hydrolysis of the cyclic amide bond of D-hydantoin derivatives. The chain is D-hydantoinase (hyuA) from Rhizobium radiobacter (Agrobacterium tumefaciens).